A 244-amino-acid chain; its full sequence is uncharacterized protein (244 aa).

The next 6 helical transmembrane spans lie at 22–42 (IMLQ…LLSF), 63–83 (FIFS…WGLT), 110–130 (VILL…EAFA), 140–160 (IMSL…NLTV), 186–206 (GVLF…IFQL), and 213–233 (AVFD…MLVV).

The protein resides in the cell membrane. This is an uncharacterized protein from Haemophilus influenzae (strain ATCC 51907 / DSM 11121 / KW20 / Rd).